Here is a 656-residue protein sequence, read N- to C-terminus: MGKIIELNEALANQIAAGEVVERPASVVKELVENSIDAGSSKITVSVEEAGLRLIEVTDNGLGLEKEDVALALRRHATSKIKDSADLFRIRTLGFRGEALPSIASVSQMTIETSNAQEEAGTKLIAKGGTIETLEPLAKRLGTKISVANLFYNTPARLKYIKSLQAELSHITDIINRLSLAHPEISFTLVNEGKEFLKTAGNGDLRQVIAAIYGIGTAKKMREINGSDLDFELTGYVSLPELTRANRNYITILINGRFIKNFLLNRAILEGYGNRLMVGRFPFAVLSIKIDPKLADVNVHPTKQEVRLSKERELMTLISKAIDEALSEGVLIPEALENLQGRVKEKETVSVQTELPLQNNPLYYDNVRQDFFVREEAIFEINKNDNSDSLTEQNSTDYTVNQPETGSVSEKITDRTVESSNEFTDRTPKNSVSNFGVDFDNIEKLSQQSTFPQLEYLAQLHATYLLCQSKEGLYLVDQHAAQERIKYEYWKDKIGEVSMEQQILLAPYLFTLPKNDFIVLAEKKDLLHEAGVFLEEYGENQFILREHPIWLKETEIEKSINEMIDIILSSKEFSLKKYRHDLAAMVACKSSIKANHPLDAESARALLRELATCKNPYSCAHGRPTIVHFSGDDIQKMFRRIQETHRSKAASWKDFE.

Residues 385–427 are disordered; the sequence is DNSDSLTEQNSTDYTVNQPETGSVSEKITDRTVESSNEFTDRT. Polar residues predominate over residues 387–410; the sequence is SDSLTEQNSTDYTVNQPETGSVSE. Positions 411 to 427 are enriched in basic and acidic residues; the sequence is KITDRTVESSNEFTDRT.

It belongs to the DNA mismatch repair MutL/HexB family.

This protein is involved in the repair of mismatches in DNA. It is required for dam-dependent methyl-directed DNA mismatch repair. May act as a 'molecular matchmaker', a protein that promotes the formation of a stable complex between two or more DNA-binding proteins in an ATP-dependent manner without itself being part of a final effector complex. In Lactococcus lactis subsp. cremoris (strain SK11), this protein is DNA mismatch repair protein MutL.